A 687-amino-acid chain; its full sequence is E3 ubiquitin-protein ligase RNF19B (687 aa).

The tract at residues 1-294 is required for ubiquitin ligase activity and for protection against staurosporin-induced cell death; it reads MRLRNDCLVR…VCGCEFCWLC (294 aa). Residues 53 to 88 are disordered; that stretch reads RTRAAPEPSVPSPPPSPPPPPPPPVSVPPPPSSPGG. The span at 60–85 shows a compositional bias: pro residues; that stretch reads PSVPSPPPSPPPPPPPPVSVPPPPSS. Positions 91-313 are TRIAD supradomain; the sequence is SLIECPLCLV…LSPSGCTFWG (223 aa). Zn(2+) contacts are provided by cysteine 95, cysteine 98, cysteine 118, cysteine 121, cysteine 182, cysteine 187, cysteine 204, cysteine 209, cysteine 214, cysteine 217, histidine 222, cysteine 227, cysteine 263, and cysteine 266. The RING-type 1 zinc finger occupies 95-144; it reads CPLCLVRQPPEEIPELLSCRHRSCLRCLRQYLRIEICESRVNLRCPECAE. An IBR-type zinc finger spans residues 161–227; that stretch reads TRKYEEFLLR…KHVWHPNQTC (67 aa). Residues 263–294 form an RING-type 2; atypical zinc finger; that stretch reads CPRCSAYIIKMNDGSCNHMTCSVCGCEFCWLC. The active site involves cysteine 278. Cysteine 283, cysteine 286, cysteine 291, cysteine 294, histidine 302, and cysteine 309 together coordinate Zn(2+). Helical transmembrane passes span 330-350 and 391-411; these read LIGA…AMVI and VVAA…VYGV. The disordered stretch occupies residues 618 to 662; the sequence is SIRSDLESSDAQSDDVPDLASEEYDSPHLFPPSPSNALQESPPHR. Over residues 629-641 the composition is skewed to acidic residues; that stretch reads QSDDVPDLASEEY.

Belongs to the RBR family. RNF19 subfamily. Interacts with UBE2L3, UBE2L6 and UCKL1.

Its subcellular location is the cytoplasmic granule membrane. It localises to the endoplasmic reticulum membrane. It catalyses the reaction [E2 ubiquitin-conjugating enzyme]-S-ubiquitinyl-L-cysteine + [acceptor protein]-L-lysine = [E2 ubiquitin-conjugating enzyme]-L-cysteine + [acceptor protein]-N(6)-ubiquitinyl-L-lysine.. Its pathway is protein modification; protein ubiquitination. In terms of biological role, E3 ubiquitin-protein ligase which accepts ubiquitin from E2 ubiquitin-conjugating enzymes UBE2L3 and UBE2L6 in the form of a thioester and then directly transfers the ubiquitin to targeted substrates, such as UCKL1. Involved in the cytolytic activity of natural killer cells and cytotoxic T-cells. Protects against staurosporin-induced cell death. The chain is E3 ubiquitin-protein ligase RNF19B (rnf19b) from Xenopus laevis (African clawed frog).